Consider the following 353-residue polypeptide: Mitochondrial distribution and morphology protein 12 (353 aa).

One can recognise an SMP-LTD domain in the interval 1-330; it reads MSFDIKWENL…WPSWICLDMN (330 aa). Acidic residues-rich tracts occupy residues 64-75, 84-103, and 330-342; these read DEFYEDTTDSPE, TGDDDDDDDDDEDDESDDDG, and NDDDEEEEEEENP. 2 disordered regions span residues 64-140 and 330-353; these read DEFY…NRSR and NDDDEEEEEEENPSESSSTTHVGS.

Belongs to the MDM12 family. As to quaternary structure, component of the ER-mitochondria encounter structure (ERMES) or MDM complex, composed of MMM1, MDM10, MDM12 and MDM34. An MMM1 homodimer associates with one molecule of MDM12 on each side in a pairwise head-to-tail manner, and the SMP-LTD domains of MMM1 and MDM12 generate a continuous hydrophobic tunnel for phospholipid trafficking.

The protein localises to the mitochondrion outer membrane. Its subcellular location is the endoplasmic reticulum membrane. Its function is as follows. Component of the ERMES/MDM complex, which serves as a molecular tether to connect the endoplasmic reticulum (ER) and mitochondria. Components of this complex are involved in the control of mitochondrial shape and protein biogenesis, and function in nonvesicular lipid trafficking between the ER and mitochondria. MDM12 is required for the interaction of the ER-resident membrane protein MMM1 and the outer mitochondrial membrane-resident beta-barrel protein MDM10. The MDM12-MMM1 subcomplex functions in the major beta-barrel assembly pathway that is responsible for biogenesis of all mitochondrial outer membrane beta-barrel proteins, and acts in a late step after the SAM complex. The MDM10-MDM12-MMM1 subcomplex further acts in the TOM40-specific pathway after the action of the MDM12-MMM1 complex. Essential for establishing and maintaining the structure of mitochondria and maintenance of mtDNA nucleoids. The polypeptide is Mitochondrial distribution and morphology protein 12 (Candida tropicalis (strain ATCC MYA-3404 / T1) (Yeast)).